Reading from the N-terminus, the 151-residue chain is UPF0178 protein mma_0312 (151 aa).

Belongs to the UPF0178 family.

The chain is UPF0178 protein mma_0312 from Janthinobacterium sp. (strain Marseille) (Minibacterium massiliensis).